Consider the following 178-residue polypeptide: MTLKTRYKETIRPKLLKDLGLKNIHQVPKVIKVNVNRGLGEAASNSKALEASLNEMATITGQKALVTRSKKAIAGFKIREGMAIGCTVTLRGDRMYSFLERFINLALPRIRDFRGVNPKSFDGRGNYTLGVKEQLIFPEISFDKIDSIRGMDITIVTSASNDQEGKALLKELGMPFSN.

It belongs to the universal ribosomal protein uL5 family. Part of the 50S ribosomal subunit; part of the 5S rRNA/L5/L18/L25 subcomplex. Contacts the 5S rRNA and the P site tRNA. Forms a bridge to the 30S subunit in the 70S ribosome.

Functionally, this is one of the proteins that bind and probably mediate the attachment of the 5S RNA into the large ribosomal subunit, where it forms part of the central protuberance. In the 70S ribosome it contacts protein S13 of the 30S subunit (bridge B1b), connecting the 2 subunits; this bridge is implicated in subunit movement. Contacts the P site tRNA; the 5S rRNA and some of its associated proteins might help stabilize positioning of ribosome-bound tRNAs. In Prochlorococcus marinus (strain MIT 9515), this protein is Large ribosomal subunit protein uL5.